The primary structure comprises 92 residues: MTRSLKKNPFVANNLLKKINKLNTKAEKEIIITWSRASTIIPIMVGHTIAIHNGKEHLPIYITDRMVGHKLGEFAPTLNFRGHAKSDNRSRR.

The protein belongs to the universal ribosomal protein uS19 family.

Its subcellular location is the plastid. It localises to the chloroplast. Protein S19 forms a complex with S13 that binds strongly to the 16S ribosomal RNA. This Lactuca sativa (Garden lettuce) protein is Small ribosomal subunit protein uS19c.